The chain runs to 231 residues: Putative histone H1.9 (231 aa).

One can recognise an H15 domain in the interval 113 to 177 (QKPSTSKVIL…GSAGSFTLGK (65 aa)). Phosphoserine is present on Ser-135. The interval 177 to 214 (KKQASKSKLKVKRQRQQRWRSGQRPFGQHRSLLGSKQG) is disordered. The segment covering 179 to 194 (QASKSKLKVKRQRQQR) has biased composition (basic residues).

The protein belongs to the histone H1/H5 family. In terms of tissue distribution, expressed exclusively in the testis.

Its subcellular location is the nucleus. It localises to the chromosome. In terms of biological role, DNA-binding protein that may be implicated in chromatin remodeling and/or transcriptional regulation during spermiogenesis, the process of spermatid maturation into spermatozoa. The chain is Putative histone H1.9 from Homo sapiens (Human).